A 462-amino-acid polypeptide reads, in one-letter code: uncharacterized protein (462 aa).

Residues 22–90 form the HTH gntR-type domain; it reads KPIYKALAGQ…VGSGTFVSYD (69 aa). Residues 50-69 constitute a DNA-binding region (H-T-H motif); it reads QRELADYLDLNVSTISKAFK. Residue Lys308 is modified to N6-(pyridoxal phosphate)lysine.

It in the C-terminal section; belongs to the class-I pyridoxal-phosphate-dependent aminotransferase family. Pyridoxal 5'-phosphate serves as cofactor.

This is an uncharacterized protein from Bacillus subtilis (strain 168).